Reading from the N-terminus, the 163-residue chain is Protein LOL5 (163 aa).

2 stretches are compositionally biased toward polar residues: residues 1–25 and 33–44; these read MSQL…QPQS and LQPQHPPSSTAH. Residues 1–51 form a disordered region; that stretch reads MSQLPLASQATTTDLVSTTAMQPQSEGIVDESLQPQHPPSSTAHDSPCLQD. Putative zinc finger stretches follow at residues 70 to 100 and 108 to 138; these read QMVC…MNYV and KVHC…VTEI.

The protein localises to the nucleus. In terms of biological role, involved in plant growth and disease resistance. The sequence is that of Protein LOL5 (LOL5) from Oryza sativa subsp. japonica (Rice).